An 848-amino-acid chain; its full sequence is Xylosyltransferase (848 aa).

Residues 1–14 (MSLHRTLRRFLRKW) are Cytoplasmic-facing. Residues 15 to 35 (KALVYAVSFILLIQAFFTFQS) form a helical; Signal-anchor for type II membrane protein membrane-spanning segment. Residues 36 to 843 (SPNLMEEEHL…PKTELISVKP (808 aa)) lie on the Lumenal side of the membrane. Cystine bridges form between cysteine 145-cysteine 173, cysteine 189-cysteine 427, cysteine 446-cysteine 459, and cysteine 448-cysteine 457. Residues valine 219, aspartate 247, and 276-278 (TIW) each bind UDP-alpha-D-xylose. The N-linked (GlcNAc...) asparagine glycan is linked to asparagine 306. 379–380 (DW) contacts UDP-alpha-D-xylose. UDP-alpha-D-xylose is bound by residues serine 460 and 482 to 483 (RK). 2 disulfide bridges follow: cysteine 529–cysteine 811 and cysteine 794–cysteine 822. A glycan (N-linked (GlcNAc...) asparagine) is linked at asparagine 530. Positions 824-848 (NTNWSSLSPDPKTELISVKPDGRIR) are disordered. A glycan (N-linked (GlcNAc...) asparagine) is linked at asparagine 826.

The protein belongs to the glycosyltransferase 14 family. XylT subfamily. The cofactor is a divalent metal cation.

It localises to the endoplasmic reticulum membrane. Its subcellular location is the golgi apparatus membrane. It carries out the reaction UDP-alpha-D-xylose + L-seryl-[protein] = 3-O-(beta-D-xylosyl)-L-seryl-[protein] + UDP + H(+). It functions in the pathway glycan metabolism; chondroitin sulfate biosynthesis. The protein operates within glycan metabolism; heparan sulfate biosynthesis. Catalyzes the first step in biosynthesis of glycosaminoglycan. Transfers D-xylose from UDP-D-xylose to specific serine residues of the core protein. Initial enzyme in the biosynthesis of chondroitin sulfate and dermatan sulfate proteoglycans in fibroblasts and chondrocytes. This Ciona intestinalis (Transparent sea squirt) protein is Xylosyltransferase (xt).